The chain runs to 306 residues: Curved DNA-binding protein (306 aa).

The region spanning aspartate 5–tryptophan 69 is the J domain.

It is found in the cytoplasm. The protein localises to the nucleoid. Its function is as follows. DNA-binding protein that preferentially recognizes a curved DNA sequence. It is probably a functional analog of DnaJ; displays overlapping activities with DnaJ, but functions under different conditions, probably acting as a molecular chaperone in an adaptive response to environmental stresses other than heat shock. Lacks autonomous chaperone activity; binds native substrates and targets them for recognition by DnaK. Its activity is inhibited by the binding of CbpM. This chain is Curved DNA-binding protein, found in Escherichia coli (strain 55989 / EAEC).